The chain runs to 204 residues: FMN-dependent NADH:quinone oxidoreductase (204 aa).

FMN contacts are provided by residues serine 9, 15–17 (SVS), and 97–100 (MYNF).

Belongs to the azoreductase type 1 family. In terms of assembly, homodimer. Requires FMN as cofactor.

The enzyme catalyses 2 a quinone + NADH + H(+) = 2 a 1,4-benzosemiquinone + NAD(+). It carries out the reaction N,N-dimethyl-1,4-phenylenediamine + anthranilate + 2 NAD(+) = 2-(4-dimethylaminophenyl)diazenylbenzoate + 2 NADH + 2 H(+). Its function is as follows. Quinone reductase that provides resistance to thiol-specific stress caused by electrophilic quinones. In terms of biological role, also exhibits azoreductase activity. Catalyzes the reductive cleavage of the azo bond in aromatic azo compounds to the corresponding amines. The polypeptide is FMN-dependent NADH:quinone oxidoreductase (Methylobacterium radiotolerans (strain ATCC 27329 / DSM 1819 / JCM 2831 / NBRC 15690 / NCIMB 10815 / 0-1)).